Here is a 362-residue protein sequence, read N- to C-terminus: 3-dehydroquinate synthase (362 aa).

NAD(+) is bound by residues 71–76, 105–109, 129–130, Lys-142, Lys-151, and 169–172; these read DGEQYK, GVIGD, TT, and CLST. Zn(2+)-binding residues include Glu-184, His-247, and His-264.

Belongs to the sugar phosphate cyclases superfamily. Dehydroquinate synthase family. Co(2+) is required as a cofactor. Zn(2+) serves as cofactor. Requires NAD(+) as cofactor.

It localises to the cytoplasm. It carries out the reaction 7-phospho-2-dehydro-3-deoxy-D-arabino-heptonate = 3-dehydroquinate + phosphate. Its pathway is metabolic intermediate biosynthesis; chorismate biosynthesis; chorismate from D-erythrose 4-phosphate and phosphoenolpyruvate: step 2/7. In terms of biological role, catalyzes the conversion of 3-deoxy-D-arabino-heptulosonate 7-phosphate (DAHP) to dehydroquinate (DHQ). The polypeptide is 3-dehydroquinate synthase (Vibrio atlanticus (strain LGP32) (Vibrio splendidus (strain Mel32))).